The chain runs to 210 residues: Large ribosomal subunit protein uL4 (210 aa).

Belongs to the universal ribosomal protein uL4 family. Part of the 50S ribosomal subunit.

In terms of biological role, one of the primary rRNA binding proteins, this protein initially binds near the 5'-end of the 23S rRNA. It is important during the early stages of 50S assembly. It makes multiple contacts with different domains of the 23S rRNA in the assembled 50S subunit and ribosome. Its function is as follows. Forms part of the polypeptide exit tunnel. The sequence is that of Large ribosomal subunit protein uL4 from Orientia tsutsugamushi (strain Boryong) (Rickettsia tsutsugamushi).